Here is a 214-residue protein sequence, read N- to C-terminus: Transmembrane emp24 domain-containing protein p24delta9 (214 aa).

The first 24 residues, 1–24 (MFLRSLNLCTILLFLAISSQVSQS), serve as a signal peptide directing secretion. The Lumenal segment spans residues 25–181 (LHFELQSGRT…QNLNRATNSK (157 aa)). Positions 34–149 (TKCISEDIKS…VEVMEFDVKR (116 aa)) constitute a GOLD domain. Residues 164-177 (LREREEEMQNLNRA) are a coiled coil. Arginine 167 carries the omega-N-methylated arginine modification. A helical membrane pass occupies residues 182-202 (MAWLSFLSLFVCLGVAGMQFV). Over 203–214 (HLKTFFEKKKVI) the chain is Cytoplasmic. The short motif at 207–208 (FF) is the COPII vesicle coat-binding element. The COPI vesicle coat-binding signature appears at 207–214 (FFEKKKVI).

The protein belongs to the EMP24/GP25L family. As to quaternary structure, probably oligomerizes with other members of the EMP24/GP25L family. Associates with the COPI vesicle coat (coatomer). Associates with the COPII vesicle coat (coatomer).

The protein localises to the endoplasmic reticulum membrane. The protein resides in the golgi apparatus. It is found in the cis-Golgi network membrane. Its subcellular location is the golgi stack membrane. Involved in vesicular protein trafficking. Mainly functions in the early secretory pathway. Thought to act as cargo receptor at the lumenal side for incorporation of secretory cargo molecules into transport vesicles and to be involved in vesicle coat formation at the cytoplasmic side. This is Transmembrane emp24 domain-containing protein p24delta9 from Arabidopsis thaliana (Mouse-ear cress).